The sequence spans 425 residues: Putative E3 ubiquitin-protein ligase UBR7 (425 aa).

The UBR-type zinc finger occupies 44 to 116 (EKCSYSQGSV…KNLECKLFPD (73 aa)). A PHD-type; atypical zinc finger spans residues 132-188 (GLYCVCKRPYPDPEDEVPDEMIQCVVCEDWFHGRHLGAIPPESGDFQEMVCQACMRR). Residues 212 to 269 (LPNATGMGDEDVSKPENGAPQDNGLKEDAPEHGRDSVNEVKAEQKNEPCSSSSSESDL) form a disordered region. Residues lysine 225 and lysine 252 each participate in a glycyl lysine isopeptide (Lys-Gly) (interchain with G-Cter in SUMO2) cross-link. Basic and acidic residues predominate over residues 235 to 257 (GLKEDAPEHGRDSVNEVKAEQKN). Position 264 is a phosphoserine (serine 264). Glycyl lysine isopeptide (Lys-Gly) (interchain with G-Cter in SUMO2) cross-links involve residues lysine 274 and lysine 398.

As to expression, expressed in testis and sperm (at protein level).

It catalyses the reaction S-ubiquitinyl-[E2 ubiquitin-conjugating enzyme]-L-cysteine + [acceptor protein]-L-lysine = [E2 ubiquitin-conjugating enzyme]-L-cysteine + N(6)-ubiquitinyl-[acceptor protein]-L-lysine.. The protein operates within protein modification; protein ubiquitination. In terms of biological role, E3 ubiquitin-protein ligase which is a component of the N-end rule pathway. Recognizes and binds to proteins bearing specific N-terminal residues that are destabilizing according to the N-end rule, leading to their ubiquitination and subsequent degradation. This chain is Putative E3 ubiquitin-protein ligase UBR7 (Ubr7), found in Mus musculus (Mouse).